The chain runs to 578 residues: Putative fatty-acid--CoA ligase fadD21 (578 aa).

The protein belongs to the ATP-dependent AMP-binding enzyme family.

The chain is Putative fatty-acid--CoA ligase fadD21 (fadD21) from Mycobacterium bovis (strain ATCC BAA-935 / AF2122/97).